The primary structure comprises 378 residues: Protein RecA (378 aa).

The segment at 1-20 (MAAKKDKSVPDSKITDKEGK) is disordered. 80 to 87 (GAESSGKT) provides a ligand contact to ATP. The disordered stretch occupies residues 344-378 (GPVDKKKKKSKKEASSDDTDDENLEIDDAIDENND). The segment covering 359–378 (SDDTDDENLEIDDAIDENND) has biased composition (acidic residues).

The protein belongs to the RecA family.

The protein resides in the cytoplasm. Can catalyze the hydrolysis of ATP in the presence of single-stranded DNA, the ATP-dependent uptake of single-stranded DNA by duplex DNA, and the ATP-dependent hybridization of homologous single-stranded DNAs. It interacts with LexA causing its activation and leading to its autocatalytic cleavage. The sequence is that of Protein RecA from Fusobacterium nucleatum subsp. nucleatum (strain ATCC 25586 / DSM 15643 / BCRC 10681 / CIP 101130 / JCM 8532 / KCTC 2640 / LMG 13131 / VPI 4355).